Reading from the N-terminus, the 264-residue chain is Acyl-[acyl-carrier-protein]--UDP-N-acetylglucosamine O-acyltransferase (264 aa).

It belongs to the transferase hexapeptide repeat family. LpxA subfamily. As to quaternary structure, homotrimer.

Its subcellular location is the cytoplasm. The catalysed reaction is a (3R)-hydroxyacyl-[ACP] + UDP-N-acetyl-alpha-D-glucosamine = a UDP-3-O-[(3R)-3-hydroxyacyl]-N-acetyl-alpha-D-glucosamine + holo-[ACP]. It functions in the pathway glycolipid biosynthesis; lipid IV(A) biosynthesis; lipid IV(A) from (3R)-3-hydroxytetradecanoyl-[acyl-carrier-protein] and UDP-N-acetyl-alpha-D-glucosamine: step 1/6. Involved in the biosynthesis of lipid A, a phosphorylated glycolipid that anchors the lipopolysaccharide to the outer membrane of the cell. The polypeptide is Acyl-[acyl-carrier-protein]--UDP-N-acetylglucosamine O-acyltransferase (Actinobacillus pleuropneumoniae serotype 7 (strain AP76)).